The following is a 554-amino-acid chain: Phenylalanine--tRNA ligase beta subunit (554 aa).

The region spanning 276–351 (LTLKSRIISI…INYGYEKFEG (76 aa)) is the B5 domain. Residues aspartate 329, aspartate 335, glutamate 338, and glutamate 339 each coordinate Mg(2+).

Belongs to the phenylalanyl-tRNA synthetase beta subunit family. Type 2 subfamily. In terms of assembly, tetramer of two alpha and two beta subunits. The cofactor is Mg(2+).

Its subcellular location is the cytoplasm. The enzyme catalyses tRNA(Phe) + L-phenylalanine + ATP = L-phenylalanyl-tRNA(Phe) + AMP + diphosphate + H(+). This Methanococcus maripaludis (strain C7 / ATCC BAA-1331) protein is Phenylalanine--tRNA ligase beta subunit.